The primary structure comprises 99 residues: Prostate and testis expressed protein 14 (99 aa).

Residues 1-21 form the signal peptide; it reads MEKYLLLLLLGIFLRVGFLQA. Residues 22–99 enclose the UPAR/Ly6 domain; the sequence is LTCVSCGRLN…CDHQNLCNKP (78 aa). 5 cysteine pairs are disulfide-bonded: Cys24–Cys51, Cys27–Cys36, Cys43–Cys69, Cys73–Cys89, and Cys90–Cys96. A glycan (N-linked (GlcNAc...) asparagine) is linked at Asn31. N-linked (GlcNAc...) asparagine glycosylation occurs at Asn75.

Belongs to the PATE family. As to quaternary structure, monomer. Post-translationally, glycosylated. In terms of tissue distribution, predominantly expressed in the seminal vesicles. Expressed in prostate, and to a lesser extent in the cauda epididymis.

The protein resides in the secreted. In Mus musculus (Mouse), this protein is Prostate and testis expressed protein 14.